The primary structure comprises 347 residues: Metacaspase-2 (347 aa).

A propeptide spanning residues 1–55 is cleaved from the precursor; the sequence is MCSLITQLCDAGQLADYVGLGWLNAVSSQPYLVQALGLQPPPRRVDVDAAFRDAK. The interval 1–70 is regulates substrate access to the active site; that stretch reads MCSLITQLCD…QPWVATPLPG (70 aa). H158 is an active-site residue. D173, D189, and D190 together coordinate Ca(2+). C213 is a catalytic residue. Ca(2+) is bound at residue D220.

Belongs to the peptidase C14B family. Monomer. Auto-proteolytic cleavage of the propeptide after Lys-55 and between the large and small subunits after Lys-268 is required for catalytic activity towards large protein substrates but is dispensable towards small oligopeptide substrates. After processing, the propeptide and the large and small subunits remain associated by non-covalent bonds. In vivo, the unprocessed enzyme appears to be the predominant form.

The protein resides in the recycling endosome. Activated by Ca(2+). In response to calcium binding, the 280-loop, a disordered loop consisting of residues 269-275, undergoes a conformational change which stabilizes substrates in the active site. The binding to the substrate triggers the release of the N-terminal region resulting in the activation of the enzyme. Proteolytic cleavage is required for catalytic activity towards large protein substrates. Its function is as follows. Cysteine protease that cleaves specifically after arginine or lysine residues. The sequence is that of Metacaspase-2 from Trypanosoma brucei brucei (strain 927/4 GUTat10.1).